The primary structure comprises 283 residues: Glutamate racemase (283 aa).

Residues 7 to 8 and 39 to 40 each bind substrate; these read DS and YG. The active-site Proton donor/acceptor is the C70. Residue 71 to 72 coordinates substrate; sequence NT. The active-site Proton donor/acceptor is the C206. Residue 207–208 coordinates substrate; it reads TH.

This sequence belongs to the aspartate/glutamate racemases family.

It carries out the reaction L-glutamate = D-glutamate. It participates in cell wall biogenesis; peptidoglycan biosynthesis. In terms of biological role, provides the (R)-glutamate required for cell wall biosynthesis. In Phenylobacterium zucineum (strain HLK1), this protein is Glutamate racemase.